A 254-amino-acid polypeptide reads, in one-letter code: Small ribosomal subunit protein mS40 (254 aa).

The N-terminal 33 residues, 1–33 (MAAPLRHTLLKLVPTLLRSSYVAQVPLQTLCTR), are a transit peptide targeting the mitochondrion. At Ser47 the chain carries Phosphoserine. Positions 218–254 (YQGNLLEESGPPPESMPEMPTTPPAESSIEQPGSQSA) are disordered. Positions 227–240 (GPPPESMPEMPTTP) are enriched in pro residues.

It belongs to the bacterial ribosomal protein bS18 family. Mitochondrion-specific ribosomal protein mS40 subfamily. As to quaternary structure, component of the mitochondrial ribosome small subunit (28S) which comprises a 12S rRNA and about 30 distinct proteins.

Its subcellular location is the mitochondrion. The protein is Small ribosomal subunit protein mS40 (Mrps18b) of Mus musculus (Mouse).